We begin with the raw amino-acid sequence, 613 residues long: Dihydroxy-acid dehydratase (613 aa).

A Mg(2+)-binding site is contributed by aspartate 81. A [2Fe-2S] cluster-binding site is contributed by cysteine 122. Positions 123 and 124 each coordinate Mg(2+). Lysine 124 carries the N6-carboxylysine modification. A [2Fe-2S] cluster-binding site is contributed by cysteine 193. Residue glutamate 489 participates in Mg(2+) binding. Residue serine 515 is the Proton acceptor of the active site.

Belongs to the IlvD/Edd family. Homodimer. It depends on [2Fe-2S] cluster as a cofactor. Mg(2+) is required as a cofactor.

The catalysed reaction is (2R)-2,3-dihydroxy-3-methylbutanoate = 3-methyl-2-oxobutanoate + H2O. It carries out the reaction (2R,3R)-2,3-dihydroxy-3-methylpentanoate = (S)-3-methyl-2-oxopentanoate + H2O. Its pathway is amino-acid biosynthesis; L-isoleucine biosynthesis; L-isoleucine from 2-oxobutanoate: step 3/4. The protein operates within amino-acid biosynthesis; L-valine biosynthesis; L-valine from pyruvate: step 3/4. Its function is as follows. Functions in the biosynthesis of branched-chain amino acids. Catalyzes the dehydration of (2R,3R)-2,3-dihydroxy-3-methylpentanoate (2,3-dihydroxy-3-methylvalerate) into 2-oxo-3-methylpentanoate (2-oxo-3-methylvalerate) and of (2R)-2,3-dihydroxy-3-methylbutanoate (2,3-dihydroxyisovalerate) into 2-oxo-3-methylbutanoate (2-oxoisovalerate), the penultimate precursor to L-isoleucine and L-valine, respectively. This is Dihydroxy-acid dehydratase from Pseudomonas putida (strain W619).